The following is a 233-amino-acid chain: Large ribosomal subunit protein uL1 (233 aa).

It belongs to the universal ribosomal protein uL1 family. Part of the 50S ribosomal subunit.

Its function is as follows. Binds directly to 23S rRNA. The L1 stalk is quite mobile in the ribosome, and is involved in E site tRNA release. Protein L1 is also a translational repressor protein, it controls the translation of the L11 operon by binding to its mRNA. The polypeptide is Large ribosomal subunit protein uL1 (Buchnera aphidicola subsp. Baizongia pistaciae (strain Bp)).